We begin with the raw amino-acid sequence, 497 residues long: Serine/threonine-protein phosphatase 2A 56 kDa regulatory subunit beta isoform (497 aa).

Residues 1–19 (METKLPPASTPTSPSSPGL) are compositionally biased toward low complexity. 2 disordered regions span residues 1–55 (METK…YQSN) and 473–497 (QGTQ…GGQS). 6 positions are modified to phosphoserine: Ser-32, Ser-35, Ser-44, Ser-46, Ser-47, and Ser-48. Over residues 34–45 (RSLRRARPRRSH) the composition is skewed to basic residues.

This sequence belongs to the phosphatase 2A regulatory subunit B56 family. In terms of assembly, component of the serine/threonine-protein phosphatase 2A complex (PP2A). This complex consists of a common heterodimeric core enzyme, composed of a 36 kDa catalytic subunit (subunit C) and a 65 kDa constant scaffold subunit (PR65 or subunit A), that associates with a variety of regulatory subunits. Proteins that associate with the core dimer include three families of regulatory subunits B (the R2/B/PR55/B55, R3/B''/PR72/PR130/PR59 and R5/B'/B56 families), the 48 kDa variable regulatory subunit, viral proteins, and cell signaling molecules. Interacts with SGO1. Interacts with AKT1. Post-translationally, ubiquitinated by CUL3-KLHL15 complex; this modification leads to proteasomal degradation. In terms of tissue distribution, widely expressed at the mRNA level, with highest levels in cerebellum and lung.

The protein resides in the cytoplasm. Its function is as follows. As the regulatory component of the serine/threonine-protein phosphatase 2A (PP2A) holoenzyme, modulates substrate specificity, subcellular localization, and responsiveness to phosphorylation. The phosphorylated form mediates the interaction between PP2A and AKT1, leading to AKT1 dephosphorylation. In Rattus norvegicus (Rat), this protein is Serine/threonine-protein phosphatase 2A 56 kDa regulatory subunit beta isoform (Ppp2r5b).